The chain runs to 109 residues: MFGKGGMGNLMKQAQQMQDKMAKVQEEIARMEVTGEAGAGLVKVTMTGSHSVRKVDIDPSLLEDDKEMLEDLIAAACNDAARRVEENQKERMAEVTGGMQLPPGMKMPF.

This sequence belongs to the YbaB/EbfC family. In terms of assembly, homodimer.

It localises to the cytoplasm. The protein localises to the nucleoid. Binds to DNA and alters its conformation. May be involved in regulation of gene expression, nucleoid organization and DNA protection. The polypeptide is Nucleoid-associated protein Ssed_2851 (Shewanella sediminis (strain HAW-EB3)).